The primary structure comprises 106 residues: ATP-dependent Clp protease adapter protein ClpS (106 aa).

Residues 1–22 are disordered; that stretch reads MNEYHNSLKSKESVKDERQQKL. Basic and acidic residues predominate over residues 9-20; that stretch reads KSKESVKDERQQ.

It belongs to the ClpS family. In terms of assembly, binds to the N-terminal domain of the chaperone ClpA.

Its function is as follows. Involved in the modulation of the specificity of the ClpAP-mediated ATP-dependent protein degradation. This is ATP-dependent Clp protease adapter protein ClpS from Photorhabdus laumondii subsp. laumondii (strain DSM 15139 / CIP 105565 / TT01) (Photorhabdus luminescens subsp. laumondii).